The primary structure comprises 251 residues: Aliphatic sulfonates import ATP-binding protein SsuB (251 aa).

Residues 3–231 form the ABC transporter domain; it reads VSINEVSKYF…PRSKNSESFQ (229 aa). Residue 39–46 participates in ATP binding; sequence GPSGCGKS.

The protein belongs to the ABC transporter superfamily. Aliphatic sulfonates importer (TC 3.A.1.17.2) family. As to quaternary structure, the complex is composed of two ATP-binding proteins (SsuB), two transmembrane proteins (SsuC) and a solute-binding protein (SsuA).

The protein resides in the cell membrane. The catalysed reaction is ATP + H2O + aliphatic sulfonate-[sulfonate-binding protein]Side 1 = ADP + phosphate + aliphatic sulfonateSide 2 + [sulfonate-binding protein]Side 1.. Its function is as follows. Part of the ABC transporter complex SsuABC involved in aliphatic sulfonates import. Responsible for energy coupling to the transport system. The polypeptide is Aliphatic sulfonates import ATP-binding protein SsuB (Bacillus cereus (strain ZK / E33L)).